A 138-amino-acid chain; its full sequence is Large ribosomal subunit protein bL17 (138 aa).

A disordered region spans residues 118–138 (RDEDAKGKDSGPSQDGAAEAA).

Belongs to the bacterial ribosomal protein bL17 family. As to quaternary structure, part of the 50S ribosomal subunit. Contacts protein L32.

This chain is Large ribosomal subunit protein bL17, found in Rhodopseudomonas palustris (strain HaA2).